A 249-amino-acid chain; its full sequence is tRNA pseudouridine synthase A (249 aa).

D53 (nucleophile) is an active-site residue. Y111 contributes to the substrate binding site.

Belongs to the tRNA pseudouridine synthase TruA family. Homodimer.

The enzyme catalyses uridine(38/39/40) in tRNA = pseudouridine(38/39/40) in tRNA. Its function is as follows. Formation of pseudouridine at positions 38, 39 and 40 in the anticodon stem and loop of transfer RNAs. In Streptococcus pneumoniae serotype 2 (strain D39 / NCTC 7466), this protein is tRNA pseudouridine synthase A.